The primary structure comprises 240 residues: SURF1-like protein (240 aa).

The next 2 helical transmembrane spans lie at 7–23 (VFIT…WQLS) and 201–219 (YALT…YVIY).

This sequence belongs to the SURF1 family.

The protein localises to the cell membrane. This chain is SURF1-like protein, found in Rickettsia conorii (strain ATCC VR-613 / Malish 7).